We begin with the raw amino-acid sequence, 96 residues long: Co-chaperonin GroES (96 aa).

The protein belongs to the GroES chaperonin family. In terms of assembly, heptamer of 7 subunits arranged in a ring. Interacts with the chaperonin GroEL.

The protein localises to the cytoplasm. Together with the chaperonin GroEL, plays an essential role in assisting protein folding. The GroEL-GroES system forms a nano-cage that allows encapsulation of the non-native substrate proteins and provides a physical environment optimized to promote and accelerate protein folding. GroES binds to the apical surface of the GroEL ring, thereby capping the opening of the GroEL channel. The protein is Co-chaperonin GroES of Buchnera aphidicola subsp. Acyrthosiphon pisum (strain 5A).